The sequence spans 590 residues: Aspartate--tRNA(Asp/Asn) ligase (590 aa).

L-aspartate is bound at residue E175. An aspartate region spans residues Q199 to K202. L-aspartate is bound by residues R221 and H450. An ATP-binding site is contributed by R221–E223. Residue E484 participates in ATP binding. R491 lines the L-aspartate pocket. G536–R539 contributes to the ATP binding site.

This sequence belongs to the class-II aminoacyl-tRNA synthetase family. Type 1 subfamily. As to quaternary structure, homodimer.

The protein localises to the cytoplasm. The catalysed reaction is tRNA(Asx) + L-aspartate + ATP = L-aspartyl-tRNA(Asx) + AMP + diphosphate. Its function is as follows. Aspartyl-tRNA synthetase with relaxed tRNA specificity since it is able to aspartylate not only its cognate tRNA(Asp) but also tRNA(Asn). Reaction proceeds in two steps: L-aspartate is first activated by ATP to form Asp-AMP and then transferred to the acceptor end of tRNA(Asp/Asn). In Rhodopseudomonas palustris (strain BisB18), this protein is Aspartate--tRNA(Asp/Asn) ligase.